The primary structure comprises 222 residues: uncharacterized protein (222 aa).

Positions 142–222 (ARRGGCVHPP…LPDPPSAGHL (81 aa)) are disordered. Low complexity predominate over residues 160–169 (QSRSISSRRA). Residues 182–196 (PRRRPHRHRTRPQTR) are compositionally biased toward basic residues.

This sequence belongs to the Rv1128c/1148c/1588c/1702c/1945/3466 family.

This is an uncharacterized protein from Mycobacterium tuberculosis (strain CDC 1551 / Oshkosh).